The chain runs to 257 residues: Auxin-responsive protein IAA17 (257 aa).

2 disordered regions span residues 1 to 51 and 85 to 119; these read MSPP…PAAT and GKKA…QVVG. The EAR-like (transcriptional repression) motif lies at 33–37; it reads LRLGL. Residues 105 to 118 show a composition bias toward low complexity; sequence AAAPQAPAAKAQVV. The region spanning 151–239 is the PB1 domain; that stretch reads FLYVKVSMDG…SCRRLRIMKG (89 aa).

It belongs to the Aux/IAA family. In terms of assembly, homodimers and heterodimers. Highly expressed in etiolated seedlings and flowers. Expressed in roots and green seedlings.

It is found in the nucleus. In terms of biological role, aux/IAA proteins are short-lived transcriptional factors that function as repressors of early auxin response genes at low auxin concentrations. This is Auxin-responsive protein IAA17 (IAA17) from Oryza sativa subsp. japonica (Rice).